Consider the following 311-residue polypeptide: Methionyl-tRNA formyltransferase (311 aa).

Position 110–113 (110–113) interacts with (6S)-5,6,7,8-tetrahydrofolate; it reads SLLP.

The protein belongs to the Fmt family.

It carries out the reaction L-methionyl-tRNA(fMet) + (6R)-10-formyltetrahydrofolate = N-formyl-L-methionyl-tRNA(fMet) + (6S)-5,6,7,8-tetrahydrofolate + H(+). Attaches a formyl group to the free amino group of methionyl-tRNA(fMet). The formyl group appears to play a dual role in the initiator identity of N-formylmethionyl-tRNA by promoting its recognition by IF2 and preventing the misappropriation of this tRNA by the elongation apparatus. The chain is Methionyl-tRNA formyltransferase from Acidobacterium capsulatum (strain ATCC 51196 / DSM 11244 / BCRC 80197 / JCM 7670 / NBRC 15755 / NCIMB 13165 / 161).